Consider the following 113-residue polypeptide: Protein Asterix (113 aa).

The helical transmembrane segment at 81 to 97 threads the bilayer; that stretch reads IVSSFMLSVSAVVMSYL.

This sequence belongs to the Asterix family.

Its subcellular location is the membrane. The polypeptide is Protein Asterix (Caenorhabditis elegans).